The following is a 65-amino-acid chain: uncharacterized protein (65 aa).

This is an uncharacterized protein from Rickettsia conorii (strain ATCC VR-613 / Malish 7).